The following is a 305-amino-acid chain: Porphobilinogen deaminase (305 aa).

Cysteine 240 bears the S-(dipyrrolylmethanemethyl)cysteine mark.

Belongs to the HMBS family. As to quaternary structure, monomer. Requires dipyrromethane as cofactor.

It carries out the reaction 4 porphobilinogen + H2O = hydroxymethylbilane + 4 NH4(+). The protein operates within porphyrin-containing compound metabolism; protoporphyrin-IX biosynthesis; coproporphyrinogen-III from 5-aminolevulinate: step 2/4. Its function is as follows. Tetrapolymerization of the monopyrrole PBG into the hydroxymethylbilane pre-uroporphyrinogen in several discrete steps. This chain is Porphobilinogen deaminase, found in Xylella fastidiosa (strain M23).